A 294-amino-acid polypeptide reads, in one-letter code: 4-hydroxybenzoate octaprenyltransferase (294 aa).

The next 8 membrane-spanning stretches (helical) occupy residues 20-42 (LLRI…ALWL), 98-118 (WEAV…VVLF), 120-140 (NTLT…YPFM), 145-165 (HLPQ…AWAA), 175-195 (WLLF…YAMV), 218-238 (AIIA…GQRA), 242-262 (SFYY…QYLA), and 274-294 (FLNN…DLAF).

Belongs to the UbiA prenyltransferase family. It depends on Mg(2+) as a cofactor.

Its subcellular location is the cell inner membrane. The catalysed reaction is all-trans-octaprenyl diphosphate + 4-hydroxybenzoate = 4-hydroxy-3-(all-trans-octaprenyl)benzoate + diphosphate. Its pathway is cofactor biosynthesis; ubiquinone biosynthesis. In terms of biological role, catalyzes the prenylation of para-hydroxybenzoate (PHB) with an all-trans polyprenyl group. Mediates the second step in the final reaction sequence of ubiquinone-8 (UQ-8) biosynthesis, which is the condensation of the polyisoprenoid side chain with PHB, generating the first membrane-bound Q intermediate 3-octaprenyl-4-hydroxybenzoate. The chain is 4-hydroxybenzoate octaprenyltransferase from Marinobacter nauticus (strain ATCC 700491 / DSM 11845 / VT8) (Marinobacter aquaeolei).